The sequence spans 248 residues: Putative mutator protein MutT4 (248 aa).

Residues 1-64 (MSDGEQAKSR…GSTRMRTVHE (64 aa)) are disordered. A compositionally biased stretch (basic residues) spans 9-20 (SRRRRGRRRGRR). Positions 31–44 (AQPAGDATPTPATA) are enriched in low complexity. Basic residues predominate over residues 45–57 (KRSRSRSPRRGST). A Nudix hydrolase domain is found at 62-198 (VHETSAGGLV…DERRLAEVAD (137 aa)). The Mg(2+) site is built by glycine 103, glutamate 118, glutamate 121, and glutamate 122. The Nudix box motif lies at 103 to 124 (GHIELGETAEQTAIREVAEETG). The interval 204–248 (LQSDGPAALPPLPPSSPRRRPQTHSRARHADDSAPGQHNGPGPGP) is disordered. Basic residues predominate over residues 220-230 (PRRRPQTHSRA).

Belongs to the Nudix hydrolase family. Mg(2+) serves as cofactor. It depends on Mn(2+) as a cofactor.

Its function is as follows. May be involved in the GO system responsible for removing an oxidatively damaged form of guanine (7,8-dihydro-8-oxoguanine, 8-oxo-dGTP) from DNA and the nucleotide pool. The sequence is that of Putative mutator protein MutT4 (mutT4) from Mycobacterium tuberculosis (strain CDC 1551 / Oshkosh).